Here is a 241-residue protein sequence, read N- to C-terminus: 2,3,4,5-tetrahydropyridine-2,6-dicarboxylate N-acetyltransferase (241 aa).

Belongs to the transferase hexapeptide repeat family. DapH subfamily.

It carries out the reaction (S)-2,3,4,5-tetrahydrodipicolinate + acetyl-CoA + H2O = L-2-acetamido-6-oxoheptanedioate + CoA. The protein operates within amino-acid biosynthesis; L-lysine biosynthesis via DAP pathway; LL-2,6-diaminopimelate from (S)-tetrahydrodipicolinate (acetylase route): step 1/3. Its function is as follows. Catalyzes the transfer of an acetyl group from acetyl-CoA to tetrahydrodipicolinate. This chain is 2,3,4,5-tetrahydropyridine-2,6-dicarboxylate N-acetyltransferase, found in Thermoanaerobacter sp. (strain X514).